Here is a 368-residue protein sequence, read N- to C-terminus: S-adenosylmethionine:tRNA ribosyltransferase-isomerase (368 aa).

The protein belongs to the QueA family. Monomer.

The protein localises to the cytoplasm. The catalysed reaction is 7-aminomethyl-7-carbaguanosine(34) in tRNA + S-adenosyl-L-methionine = epoxyqueuosine(34) in tRNA + adenine + L-methionine + 2 H(+). The protein operates within tRNA modification; tRNA-queuosine biosynthesis. Transfers and isomerizes the ribose moiety from AdoMet to the 7-aminomethyl group of 7-deazaguanine (preQ1-tRNA) to give epoxyqueuosine (oQ-tRNA). The protein is S-adenosylmethionine:tRNA ribosyltransferase-isomerase of Methylorubrum extorquens (strain CM4 / NCIMB 13688) (Methylobacterium extorquens).